Consider the following 269-residue polypeptide: Propanediol uptake facilitator PduF (269 aa).

2 helical membrane-spanning segments follow: residues 10-30 (IAEF…LSAL) and 42-62 (ICII…GISG). The short motif at 66–68 (NPA) is the NPA 1 element. The next 3 helical transmembrane spans lie at 69–89 (ITIA…PYTV), 143–163 (VWQA…MIMA), and 179–199 (LLIG…TGFA). The NPA 2 motif lies at 201 to 203 (NPA). A helical membrane pass occupies residues 228-248 (IPYFIVPIVAPIIGACAGAAI).

Belongs to the MIP/aquaporin (TC 1.A.8) family.

The protein localises to the cell inner membrane. Its function is as follows. Probably facilitates diffusion of 1,2-propanediol (1,2-PD) into the cell. The chain is Propanediol uptake facilitator PduF from Citrobacter freundii.